A 1167-amino-acid chain; its full sequence is Phenyloxazoline synthase MbtB (1167 aa).

The region spanning 2-78 (EAVVTSSQTV…AWTRLVGERT (77 aa)) is the Carrier 1 domain. O-(pantetheine 4'-phosphoryl)serine is present on Ser39. Residues 78 to 100 (TAESPGAATQSGDTAASAGDPDA) form a disordered region. Positions 98–390 (PDAPFPLAPI…SSLMLDVDFT (293 aa)) are condensation/cyclization. The adenylation stretch occupies residues 575-967 (TYAELRERVL…RIAGVEAAVA (393 aa)). Residues 1054-1130 (VPSTALERAL…ALARRLVDHE (77 aa)) form the Carrier 2 domain. O-(pantetheine 4'-phosphoryl)serine is present on Ser1089.

Belongs to the ATP-dependent AMP-binding enzyme family. MbtB subfamily. Requires pantetheine 4'-phosphate as cofactor. Post-translationally, 4'-phosphopantetheine is transferred from CoA to a specific serine in each of the two carrier protein domains, leading to their activation from apo to holo forms.

It participates in siderophore biosynthesis; mycobactin biosynthesis. Functionally, involved in the initial steps of the mycobactin biosynthetic pathway. Putatively couples activated salicylic acid with serine or threonine and cyclizes this precursor to the hydroxyphenyloxazoline ring system present in this class of siderophores. The protein is Phenyloxazoline synthase MbtB (mbtB) of Mycobacterium sp. (strain MCS).